The chain runs to 609 residues: MPDDFNLKSFLADLPHLPGVYRHLDAAGEVMYVGKARDLKKRVSSYFQKNLASPRIAQMVAKVASVDVTVTRSEAEALLLENNLIKSLRPRYNILFRDDKSYPYLLITGHAWPRIAYYRGATSKRGQYFGPYPNSWAVRETIQILQKVFRLRTCEDTVFANRSRPCLLHQIGRCSAPCVGVIEAGDYAHDVQRAVRFLNGEAREVMDEIEARMLQASTELRFEEAAVLRDQMGSLSKVLHQQTMENVGGDDTDVIAVASAGGKICVNLAMVRGGRHLGDKPFFPTHAEGEQPAQVLEAFVAQHYADGAMPPVLVCSHALPDSGLVGLLAEQGGTRAARVLTRPQGVRRSWLEQAQKNAEMALARALTESGARAGRTLALAEALDLDTDEESLDALRIECFDISHTAGEATQASCVVFLHHDMQPSLYRRYNIVGITPGDDYAAMRQVLTRRFGKVADGEAPMPGLVLIDGGKGQVEVARQVFVELGLDIQSLVGVAKGEGRKVGLETLVFADGRPPVALGKESAALMLIAQVRDEAHRFAITGMRARRAKTRNVSRLEEIEGIGARRRQRLLARFGGLSGVSSASIEDLASVEGISQELAVRIYDALHG.

Residues 16 to 94 (HLPGVYRHLD…IKSLRPRYNI (79 aa)) enclose the GIY-YIG domain. A UVR domain is found at 203–238 (REVMDEIEARMLQASTELRFEEAAVLRDQMGSLSKV).

The protein belongs to the UvrC family. In terms of assembly, interacts with UvrB in an incision complex.

It is found in the cytoplasm. Functionally, the UvrABC repair system catalyzes the recognition and processing of DNA lesions. UvrC both incises the 5' and 3' sides of the lesion. The N-terminal half is responsible for the 3' incision and the C-terminal half is responsible for the 5' incision. The polypeptide is UvrABC system protein C (Bordetella bronchiseptica (strain ATCC BAA-588 / NCTC 13252 / RB50) (Alcaligenes bronchisepticus)).